Here is a 311-residue protein sequence, read N- to C-terminus: Cell division protein FtsQ (311 aa).

The interval 1–28 (MTTRSPARPLIARRSTPAPTPAPHDPAP) is disordered. Topologically, residues 1–46 (MTTRSPARPLIARRSTPAPTPAPHDPAPSRLSYRVTRLWLTPIFRK) are cytoplasmic. Residues 47–67 (ALHLGIPVFALFAAVTWYLGD) form a helical membrane-spanning segment. The Periplasmic segment spans residues 68-311 (ETRVAELFEA…AERPDGDTRG (244 aa)). Residues 91-159 (FRVNVLGIDG…GYLAVRIDER (69 aa)) enclose the POTRA domain.

The protein belongs to the FtsQ/DivIB family. FtsQ subfamily.

Its subcellular location is the cell inner membrane. Its function is as follows. Essential cell division protein. The protein is Cell division protein FtsQ of Jannaschia sp. (strain CCS1).